We begin with the raw amino-acid sequence, 295 residues long: 4-hydroxy-tetrahydrodipicolinate synthase (295 aa).

T47 is a binding site for pyruvate. Y135 (proton donor/acceptor) is an active-site residue. K163 serves as the catalytic Schiff-base intermediate with substrate. I206 is a binding site for pyruvate.

Belongs to the DapA family. As to quaternary structure, homodimer.

The protein localises to the cytoplasm. The enzyme catalyses L-aspartate 4-semialdehyde + pyruvate = (2S,4S)-4-hydroxy-2,3,4,5-tetrahydrodipicolinate + H2O + H(+). The protein operates within amino-acid biosynthesis; L-lysine biosynthesis via DAP pathway; (S)-tetrahydrodipicolinate from L-aspartate: step 3/4. Its function is as follows. Catalyzes the condensation of (S)-aspartate-beta-semialdehyde [(S)-ASA] and pyruvate to 4-hydroxy-tetrahydrodipicolinate (HTPA). This is 4-hydroxy-tetrahydrodipicolinate synthase from Staphylococcus aureus (strain bovine RF122 / ET3-1).